A 635-amino-acid polypeptide reads, in one-letter code: Probable clathrin assembly protein At4g32285 (635 aa).

One can recognise an ENTH domain in the interval 23 to 159 (VASNMAPDLE…ELALFERRGR (137 aa)). The disordered stretch occupies residues 157 to 208 (RGRNGGGSSSSHQSNGDDGYNRSRDDFRSPPPRTYDYETGNGFGMPKRSRSF). Low complexity predominate over residues 165–174 (SSSHQSNGDD). The span at 175–184 (GYNRSRDDFR) shows a compositional bias: basic and acidic residues. Residue S207 is modified to Phosphoserine. T224 is subject to Phosphothreonine. A compositionally biased stretch (basic and acidic residues) spans 357 to 369 (AKRAKSPERKEIE). The disordered stretch occupies residues 357–412 (AKRAKSPERKEIEAPPAPAPPVEEPVDMNEIKALPPPENHTPPPPPAPEPKPQQPQ). The segment covering 390–409 (LPPPENHTPPPPPAPEPKPQ) has biased composition (pro residues).

Its subcellular location is the membrane. It localises to the clathrin-coated pit. The protein resides in the golgi apparatus. It is found in the cytoplasmic vesicle. The protein localises to the clathrin-coated vesicle. This chain is Probable clathrin assembly protein At4g32285, found in Arabidopsis thaliana (Mouse-ear cress).